A 399-amino-acid chain; its full sequence is Argininosuccinate synthase (399 aa).

Ala-9–Ser-17 serves as a coordination point for ATP. An L-citrulline-binding site is contributed by Tyr-85. An ATP-binding site is contributed by Gly-115. 3 residues coordinate L-aspartate: Thr-117, Asn-121, and Asp-122. Asn-121 lines the L-citrulline pocket. Residues Arg-125, Ser-173, Glu-258, and Tyr-270 each coordinate L-citrulline.

Belongs to the argininosuccinate synthase family. Type 1 subfamily. As to quaternary structure, homotetramer.

The protein resides in the cytoplasm. The enzyme catalyses L-citrulline + L-aspartate + ATP = 2-(N(omega)-L-arginino)succinate + AMP + diphosphate + H(+). It functions in the pathway amino-acid biosynthesis; L-arginine biosynthesis; L-arginine from L-ornithine and carbamoyl phosphate: step 2/3. In Streptococcus uberis (strain ATCC BAA-854 / 0140J), this protein is Argininosuccinate synthase.